A 300-amino-acid polypeptide reads, in one-letter code: Small ribosomal subunit protein uS4m (300 aa).

The S4 RNA-binding domain occupies 146-209; the sequence is KRVDMVLLRS…MKRKLLKRLK (64 aa).

The protein belongs to the universal ribosomal protein uS4 family.

It localises to the mitochondrion. This chain is Small ribosomal subunit protein uS4m (mrps4), found in Dictyostelium discoideum (Social amoeba).